The following is a 183-amino-acid chain: Photosystem I assembly protein Ycf4 (183 aa).

2 helical membrane passes run 17–39 and 59–81; these read NYLL…FLSY and FIPQ…IYIY.

Belongs to the Ycf4 family.

It localises to the plastid. Its subcellular location is the chloroplast thylakoid membrane. Functionally, seems to be required for the assembly of the photosystem I complex. The protein is Photosystem I assembly protein Ycf4 of Cyanidium caldarium (Red alga).